The following is a 355-amino-acid chain: Serpentine receptor class epsilon-1 (355 aa).

The next 7 helical transmembrane spans lie at 28-48, 56-76, 102-122, 144-164, 172-192, 232-252, and 268-288; these read FELLAMIIEIPSFLLVIYATI, LNFIGLFMLLGYYVFLVGRFI, ILSSILQFFYMGCACGISLAV, ISLFLCSEFTVACGVSAIVML, VMAFLGVFISCASFLFYLVLF, VVLFSGVNNFVMAIILTMYMS, and FAFNCCVLLYSFLMLIIIIFS.

The protein belongs to the nematode receptor-like protein sre family.

It is found in the membrane. The chain is Serpentine receptor class epsilon-1 (sre-1) from Caenorhabditis elegans.